A 407-amino-acid chain; its full sequence is Cell division protein FtsZ (407 aa).

Residues glycine 18 to asparagine 22, glycine 105 to glycine 107, glutamate 136, arginine 140, and aspartate 184 each bind GTP. The segment at phenylalanine 312–lysine 407 is disordered. Low complexity-rich tracts occupy residues alanine 336–proline 348 and alanine 368–serine 377. Over residues valine 381 to arginine 390 the composition is skewed to pro residues. Residues glutamine 396–lysine 407 are compositionally biased toward acidic residues.

The protein belongs to the FtsZ family. As to quaternary structure, homodimer. Polymerizes to form a dynamic ring structure in a strictly GTP-dependent manner. Interacts directly with several other division proteins.

Its subcellular location is the cytoplasm. In terms of biological role, essential cell division protein that forms a contractile ring structure (Z ring) at the future cell division site. The regulation of the ring assembly controls the timing and the location of cell division. One of the functions of the FtsZ ring is to recruit other cell division proteins to the septum to produce a new cell wall between the dividing cells. Binds GTP and shows GTPase activity. The polypeptide is Cell division protein FtsZ (Streptomyces griseus).